A 305-amino-acid polypeptide reads, in one-letter code: Elongation factor Ts (305 aa).

The involved in Mg(2+) ion dislocation from EF-Tu stretch occupies residues 79–82; it reads TDFV.

This sequence belongs to the EF-Ts family.

It is found in the cytoplasm. Its function is as follows. Associates with the EF-Tu.GDP complex and induces the exchange of GDP to GTP. It remains bound to the aminoacyl-tRNA.EF-Tu.GTP complex up to the GTP hydrolysis stage on the ribosome. The polypeptide is Elongation factor Ts (Brucella suis biovar 1 (strain 1330)).